The sequence spans 660 residues: Acetyl-coenzyme A synthetase (660 aa).

CoA-binding positions include 197–200 and Thr317; that span reads RGGK. ATP-binding positions include 397–399, 421–426, Asp512, and Arg528; these read GEP and DTFWQT. Ser536 serves as a coordination point for CoA. An ATP-binding site is contributed by Arg539. Residues Val550 and Val555 each contribute to the Mg(2+) site. Residue Lys625 is modified to N6-acetyllysine.

The protein belongs to the ATP-dependent AMP-binding enzyme family. The cofactor is Mg(2+). Acetylated. Deacetylation by the SIR2-homolog deacetylase activates the enzyme.

It catalyses the reaction acetate + ATP + CoA = acetyl-CoA + AMP + diphosphate. Its function is as follows. Catalyzes the conversion of acetate into acetyl-CoA (AcCoA), an essential intermediate at the junction of anabolic and catabolic pathways. AcsA undergoes a two-step reaction. In the first half reaction, AcsA combines acetate with ATP to form acetyl-adenylate (AcAMP) intermediate. In the second half reaction, it can then transfer the acetyl group from AcAMP to the sulfhydryl group of CoA, forming the product AcCoA. The polypeptide is Acetyl-coenzyme A synthetase (Ralstonia pickettii (strain 12J)).